Reading from the N-terminus, the 802-residue chain is MLVSYKWLKELVDVDVTTAELAEKMSTTGIEVEGVKTPAEGLSKLVVGHVLSCEDVPETHLHLCQVDTGDAEGPRQIVCGAPNITAGIKVIVAIPGARIADNYKIKKGKIRGMESLGMICSLAELGLPDSIIPKEFADGIQILPEDAVPGDSIFPYLDLDDEIIELSITPNRADALSMRGVAHEVAAIYGKSVHFPEKTVTEDSKPASDKISVAIESDKVTTYASRVVENVTVQPSPQWLQNLLMNAGIRPINNVVDVTNYVLLYFGQPMHAFDLDKLEESHIVARDAREGEKLVTLDGEERELTAEDIVITVADKPVSLGGIMGGASTEIDNNSKNVVLEAAVFDGKSVRKTSSRLNLRSESSSRFEKGVNNDTVLEALDFAAAMLQELANGSVLAGRVQAGSVDTEPVQVSTSLDYVNVRLGTELTFADIEDVFAKLGFGLTGDADRFTVSVPRRRWDISIQADLVEEIARIYGYEKLPTTLPEAAGTSGELTKTQTLRRKVRTIAEGAGLTEIISYTLTTPEKAVEFAATPSNLTELMWPMTVDRSALRQNLVSGMLDTVAYNVNRKNSNVAIYEIGKVFEQNGNPKEELPNEINTFAFAISGLVAEKDFQTKATPVDFFYAKGIIEALFNKLEVSVDYVATKDLASMHPGRTAAIVLDGQTIGFLGQVHPQTAKNYGIPETYVAEINLSAVEDALKPAQPFVEITKFPAVSRDIALLLKADITHQEVLDAIYSAGVKRLIAVKLFDVYTGEKLGAGMKSMAYSLTFQNPNDNLTDEEVAKYMEKITKALTEKVEAEVR.

The 116-residue stretch at Ala39–Phe154 folds into the tRNA-binding domain. Positions Thr407 to Thr482 constitute a B5 domain. Mg(2+) contacts are provided by Asp460, Asp466, Glu469, and Glu470. The FDX-ACB domain occupies Thr709 to Arg802.

This sequence belongs to the phenylalanyl-tRNA synthetase beta subunit family. Type 1 subfamily. As to quaternary structure, tetramer of two alpha and two beta subunits. The cofactor is Mg(2+).

The protein localises to the cytoplasm. It carries out the reaction tRNA(Phe) + L-phenylalanine + ATP = L-phenylalanyl-tRNA(Phe) + AMP + diphosphate + H(+). The polypeptide is Phenylalanine--tRNA ligase beta subunit (Streptococcus thermophilus (strain CNRZ 1066)).